Here is a 100-residue protein sequence, read N- to C-terminus: Large ribosomal subunit protein uL23 (100 aa).

This sequence belongs to the universal ribosomal protein uL23 family. Part of the 50S ribosomal subunit. Contacts protein L29, and trigger factor when it is bound to the ribosome.

Functionally, one of the early assembly proteins it binds 23S rRNA. One of the proteins that surrounds the polypeptide exit tunnel on the outside of the ribosome. Forms the main docking site for trigger factor binding to the ribosome. In Synechococcus sp. (strain CC9311), this protein is Large ribosomal subunit protein uL23.